A 112-amino-acid polypeptide reads, in one-letter code: Large ribosomal subunit protein uL18 (112 aa).

It belongs to the universal ribosomal protein uL18 family. As to quaternary structure, part of the 50S ribosomal subunit; part of the 5S rRNA/L5/L18/L25 subcomplex. Contacts the 5S and 23S rRNAs.

Its function is as follows. This is one of the proteins that bind and probably mediate the attachment of the 5S RNA into the large ribosomal subunit, where it forms part of the central protuberance. The polypeptide is Large ribosomal subunit protein uL18 (Thermus thermophilus (strain ATCC BAA-163 / DSM 7039 / HB27)).